A 191-amino-acid chain; its full sequence is Penicillin-binding protein activator LpoB (191 aa).

A signal peptide spans 1 to 16 (MKRYLSLALAALVLTG). C17 carries N-palmitoyl cysteine lipidation. Residue C17 is the site of S-diacylglycerol cysteine attachment.

This sequence belongs to the LpoB family. In terms of assembly, interacts with PBP1b.

It is found in the cell outer membrane. Regulator of peptidoglycan synthesis that is essential for the function of penicillin-binding protein 1B (PBP1b). The polypeptide is Penicillin-binding protein activator LpoB (Yersinia pestis (strain D182038)).